Consider the following 250-residue polypeptide: Pyridoxine 5'-phosphate synthase (250 aa).

Asparagine 11 contributes to the 3-amino-2-oxopropyl phosphate binding site. 13 to 14 (DH) is a binding site for 1-deoxy-D-xylulose 5-phosphate. Arginine 22 provides a ligand contact to 3-amino-2-oxopropyl phosphate. The active-site Proton acceptor is the histidine 47. 2 residues coordinate 1-deoxy-D-xylulose 5-phosphate: arginine 49 and histidine 54. Glutamate 74 serves as the catalytic Proton acceptor. Residue threonine 104 participates in 1-deoxy-D-xylulose 5-phosphate binding. Histidine 198 serves as the catalytic Proton donor. Residues glycine 199 and 220–221 (GY) contribute to the 3-amino-2-oxopropyl phosphate site.

The protein belongs to the PNP synthase family. In terms of assembly, homooctamer; tetramer of dimers.

The protein localises to the cytoplasm. The catalysed reaction is 3-amino-2-oxopropyl phosphate + 1-deoxy-D-xylulose 5-phosphate = pyridoxine 5'-phosphate + phosphate + 2 H2O + H(+). Its pathway is cofactor biosynthesis; pyridoxine 5'-phosphate biosynthesis; pyridoxine 5'-phosphate from D-erythrose 4-phosphate: step 5/5. Functionally, catalyzes the complicated ring closure reaction between the two acyclic compounds 1-deoxy-D-xylulose-5-phosphate (DXP) and 3-amino-2-oxopropyl phosphate (1-amino-acetone-3-phosphate or AAP) to form pyridoxine 5'-phosphate (PNP) and inorganic phosphate. The chain is Pyridoxine 5'-phosphate synthase from Bradyrhizobium diazoefficiens (strain JCM 10833 / BCRC 13528 / IAM 13628 / NBRC 14792 / USDA 110).